The following is a 247-amino-acid chain: 7-cyano-7-deazaguanine synthase (247 aa).

Position 21 to 31 (21 to 31) interacts with ATP; the sequence is FSGGQDSTACL. Zn(2+)-binding residues include cysteine 209, cysteine 224, cysteine 227, and cysteine 230.

This sequence belongs to the QueC family. Requires Zn(2+) as cofactor.

The catalysed reaction is 7-carboxy-7-deazaguanine + NH4(+) + ATP = 7-cyano-7-deazaguanine + ADP + phosphate + H2O + H(+). The protein operates within purine metabolism; 7-cyano-7-deazaguanine biosynthesis. Functionally, catalyzes the ATP-dependent conversion of 7-carboxy-7-deazaguanine (CDG) to 7-cyano-7-deazaguanine (preQ(0)). This Halorhodospira halophila (strain DSM 244 / SL1) (Ectothiorhodospira halophila (strain DSM 244 / SL1)) protein is 7-cyano-7-deazaguanine synthase.